We begin with the raw amino-acid sequence, 975 residues long: Glycine dehydrogenase (decarboxylating) (975 aa).

Position 723 is an N6-(pyridoxal phosphate)lysine (K723).

The protein belongs to the GcvP family. As to quaternary structure, the glycine cleavage system is composed of four proteins: P, T, L and H. Pyridoxal 5'-phosphate is required as a cofactor.

The catalysed reaction is N(6)-[(R)-lipoyl]-L-lysyl-[glycine-cleavage complex H protein] + glycine + H(+) = N(6)-[(R)-S(8)-aminomethyldihydrolipoyl]-L-lysyl-[glycine-cleavage complex H protein] + CO2. Functionally, the glycine cleavage system catalyzes the degradation of glycine. The P protein binds the alpha-amino group of glycine through its pyridoxal phosphate cofactor; CO(2) is released and the remaining methylamine moiety is then transferred to the lipoamide cofactor of the H protein. The sequence is that of Glycine dehydrogenase (decarboxylating) from Burkholderia lata (strain ATCC 17760 / DSM 23089 / LMG 22485 / NCIMB 9086 / R18194 / 383).